A 552-amino-acid polypeptide reads, in one-letter code: MAVSTSFSGAKLEALLFKSASNSSSTRNLSSSHLPGFCKSIRTRRILFQRTGVSSFTPFKCELASSDVLVQNDEIDPPKSSNLSALEQLKTSAVDRYTKERSSIVVIGLSIHTTPVEMREKLAIPEAEWPRAIGELCGLNHIEEAAVLSTCNRMEIYVVALSQHRGVKEVTEWMSKTSGIPVSEICQHRFLLYNNDATQHIFEVSAGLDSLVLGEGQILAQVKQVVKVGQGVAGFGRNISGLFKHAITVGKRVRTETNIAAGAVSVSSAAVELALMKLPEPSHATARMLVIGAGKMGKLVIKHLVAKGCTKMVVVNRSEERVTAIREEMKDVEIIYKPLTEMLSCTAEADVIFTSTASESLLFTKEQVKDLPPVGHDVGGLRLFIDISVPRNVGACINNLEDVRVYNVDDLKEVVAANKEDRLRKAMEAQSIITEESKQFEAWRDSLETVPTIKKLRAYAERIRTAELEKCLSKMGDDIPKKTRRAVDDLSRGIVNKLLHGPMQHLRCDGSDSRTLSETLENMHALNRMFSLETEIAVLEQKIRAKVEQNQK.

Residues 150 to 153 (TCNR), Ser-210, 215 to 217 (EGQ), and Gln-221 each bind substrate. Cys-151 serves as the catalytic Nucleophile. Position 292–297 (292–297 (GAGKMG)) interacts with NADP(+).

The protein belongs to the glutamyl-tRNA reductase family. As to expression, primarily in cotyledons and hypocotyls of greening cucumber seedlings.

It localises to the plastid. Its subcellular location is the chloroplast. The catalysed reaction is (S)-4-amino-5-oxopentanoate + tRNA(Glu) + NADP(+) = L-glutamyl-tRNA(Glu) + NADPH + H(+). Its pathway is porphyrin-containing compound metabolism; protoporphyrin-IX biosynthesis; 5-aminolevulinate from L-glutamyl-tRNA(Glu): step 1/2. In terms of biological role, catalyzes the NADPH-dependent reduction of glutamyl-tRNA(Glu) to glutamate 1-semialdehyde (GSA). This chain is Glutamyl-tRNA reductase 1, chloroplastic (HEMA1), found in Cucumis sativus (Cucumber).